The sequence spans 485 residues: Aspartyl/glutamyl-tRNA(Asn/Gln) amidotransferase subunit B (485 aa).

The protein belongs to the GatB/GatE family. GatB subfamily. Heterotrimer of A, B and C subunits.

It catalyses the reaction L-glutamyl-tRNA(Gln) + L-glutamine + ATP + H2O = L-glutaminyl-tRNA(Gln) + L-glutamate + ADP + phosphate + H(+). The enzyme catalyses L-aspartyl-tRNA(Asn) + L-glutamine + ATP + H2O = L-asparaginyl-tRNA(Asn) + L-glutamate + ADP + phosphate + 2 H(+). Its function is as follows. Allows the formation of correctly charged Asn-tRNA(Asn) or Gln-tRNA(Gln) through the transamidation of misacylated Asp-tRNA(Asn) or Glu-tRNA(Gln) in organisms which lack either or both of asparaginyl-tRNA or glutaminyl-tRNA synthetases. The reaction takes place in the presence of glutamine and ATP through an activated phospho-Asp-tRNA(Asn) or phospho-Glu-tRNA(Gln). This Bordetella petrii (strain ATCC BAA-461 / DSM 12804 / CCUG 43448) protein is Aspartyl/glutamyl-tRNA(Asn/Gln) amidotransferase subunit B.